A 77-amino-acid polypeptide reads, in one-letter code: Metallothionein-like protein 2 (77 aa).

Belongs to the metallothionein superfamily. Type 15 family.

Functionally, metallothioneins have a high content of cysteine residues that bind various heavy metals. This Trifolium repens (Creeping white clover) protein is Metallothionein-like protein 2 (MT1A).